A 295-amino-acid polypeptide reads, in one-letter code: (R)-3-hydroxydecanoyl-ACP:CoA transacylase (295 aa).

The AB hydrolase-1 domain maps to 28 to 254; sequence NTIILINGSL…VIRDAGHFLD (227 aa).

Its pathway is polyester biosynthesis; polyhydroxyalkanoate biosynthesis. Its function is as follows. Catalyzes the transfer of the acyl moiety from in vitro synthesized 3-hydroxydecanoyl-CoA to acyl carrier protein. This Ectopseudomonas oleovorans (Pseudomonas oleovorans) protein is (R)-3-hydroxydecanoyl-ACP:CoA transacylase (phaG).